Here is a 775-residue protein sequence, read N- to C-terminus: Putative late blight resistance protein homolog R1A-3 (775 aa).

Residues 16–39 (PRMNEEIVGFEDVIENLRKKLLSE) adopt a coiled-coil conformation. The NB-ARC domain maps to 17–237 (RMNEEIVGFE…LSEMEKEVEC (221 aa)). An ATP-binding site is contributed by 50 to 57 (GMPGLGKT). An HMA domain is found at 711–775 (IKKMILQFDI…VGKLIDSGML (65 aa)).

This sequence belongs to the disease resistance NB-LRR family.

It localises to the cytoplasm. The protein resides in the membrane. In terms of biological role, confers resistance to late blight (Phytophthora infestans) races carrying the avirulence gene Avr1. Resistance proteins guard the plant against pathogens that contain an appropriate avirulence protein via an indirect interaction with this avirulence protein. That triggers a defense system including the hypersensitive response, which restricts the pathogen growth. The polypeptide is Putative late blight resistance protein homolog R1A-3 (R1A-3) (Solanum demissum (Wild potato)).